The sequence spans 463 residues: Na(+)/H(+) antiporter NhaA 3 (463 aa).

The next 11 membrane-spanning stretches (helical) occupy residues 28-48, 79-99, 114-134, 144-164, 173-193, 196-216, 232-252, 305-325, 344-364, 377-397, and 413-433; these read FLATEAGGAVLLLLAAVAALL, LHHWVNDGAMAIFFAVVGLEI, IAVPALGAIGGLILPAAIYFV, GWGIPMSTDTAFVIGILALFG, LFLLTLAIVDDIGAITVVGIF, DHLNPVGLAVAGATVLAILGL, LVLWGAIHVSGVHATLAGVLV, VLHPISAFVVVPVFGLANAGV, VAAALIAGNACGISVAGVAAI, YGHLLGAATLAGIGFTISLFI, and IGILAGSLVAALAGTVILRVL. The segment at 444–463 is disordered; that stretch reads TDEPVPRLPPRPWRAPVPAK. A compositionally biased stretch (pro residues) spans 449-463; it reads PRLPPRPWRAPVPAK.

The protein belongs to the NhaA Na(+)/H(+) (TC 2.A.33) antiporter family.

It localises to the cell membrane. The enzyme catalyses Na(+)(in) + 2 H(+)(out) = Na(+)(out) + 2 H(+)(in). Na(+)/H(+) antiporter that extrudes sodium in exchange for external protons. The sequence is that of Na(+)/H(+) antiporter NhaA 3 from Frankia alni (strain DSM 45986 / CECT 9034 / ACN14a).